Reading from the N-terminus, the 428-residue chain is GTPase Obg (428 aa).

Positions 1-158 (MFIDIAKVFI…LSIVLELKLL (158 aa)) constitute an Obg domain. An OBG-type G domain is found at 159 to 331 (ADVGLLGFPN…VIKEAARMLK (173 aa)). GTP-binding positions include 165–172 (GFPNVGKS), 190–194 (FTTLK), 212–215 (DIPG), 282–285 (NKSD), and 312–314 (SAA). 2 residues coordinate Mg(2+): Ser-172 and Thr-192. An OCT domain is found at 345–428 (MYIPEEKKFT…LNDFEFEYLL (84 aa)).

Belongs to the TRAFAC class OBG-HflX-like GTPase superfamily. OBG GTPase family. In terms of assembly, monomer. Requires Mg(2+) as cofactor.

It is found in the cytoplasm. An essential GTPase which binds GTP, GDP and possibly (p)ppGpp with moderate affinity, with high nucleotide exchange rates and a fairly low GTP hydrolysis rate. Plays a role in control of the cell cycle, stress response, ribosome biogenesis and in those bacteria that undergo differentiation, in morphogenesis control. This Clostridium botulinum (strain Alaska E43 / Type E3) protein is GTPase Obg.